A 428-amino-acid polypeptide reads, in one-letter code: Glycine reductase complex component B subunits alpha and beta (428 aa).

The Schiff-base intermediate with substrate; via pyruvic acid role is filled by C242. Residue C242 is modified to Pyruvic acid (Cys).

As to quaternary structure, heterohexamer of two alpha, two beta and two gamma subunits. Component of the glycine reductase complex, together with components A and C. PB is substrate specific. The peptide chain is cleaved into beta and alpha chains, and the alpha chain N-terminal cysteine is deaminated and oxidized to form a reactive pyruvoyl group.

It carries out the reaction acetyl phosphate + [thioredoxin]-disulfide + NH4(+) + H2O = [thioredoxin]-dithiol + glycine + phosphate + H(+). Its function is as follows. In the first step of glycine reductase, the substrate is bound to component PB via a Schiff base intermediate. Then the PB-activated substrate is nucleophilically attacked by the selenol anion of component PA to transform it to a carboxymethylated selenoether and the respective amine. By action of component PC, acetyl phosphate is formed, leaving component PA in its oxidized state. Finally component PA becomes reduced by the thioredoxin system to start a new catalytic cycle of reductive deamination. The polypeptide is Glycine reductase complex component B subunits alpha and beta (grdE) (Peptoclostridium acidaminophilum (Eubacterium acidaminophilum)).